Reading from the N-terminus, the 367-residue chain is Glutamate 5-kinase (367 aa).

K10 is an ATP binding site. Substrate contacts are provided by S50, D137, and N149. Residues 169 to 170 (TD) and 211 to 217 (TGGMETK) each bind ATP. Residues 275–353 (AGDITVDDGA…QDISDILGYE (79 aa)) enclose the PUA domain.

Belongs to the glutamate 5-kinase family.

Its subcellular location is the cytoplasm. The enzyme catalyses L-glutamate + ATP = L-glutamyl 5-phosphate + ADP. The protein operates within amino-acid biosynthesis; L-proline biosynthesis; L-glutamate 5-semialdehyde from L-glutamate: step 1/2. In terms of biological role, catalyzes the transfer of a phosphate group to glutamate to form L-glutamate 5-phosphate. This chain is Glutamate 5-kinase, found in Sodalis glossinidius (strain morsitans).